A 79-amino-acid chain; its full sequence is Small ribosomal subunit protein bS18 (79 aa).

The protein belongs to the bacterial ribosomal protein bS18 family. In terms of assembly, part of the 30S ribosomal subunit. Forms a tight heterodimer with protein bS6.

Its function is as follows. Binds as a heterodimer with protein bS6 to the central domain of the 16S rRNA, where it helps stabilize the platform of the 30S subunit. This Afipia carboxidovorans (strain ATCC 49405 / DSM 1227 / KCTC 32145 / OM5) (Oligotropha carboxidovorans) protein is Small ribosomal subunit protein bS18.